The chain runs to 289 residues: Esterase GA18864 (289 aa).

Low complexity predominate over residues 1–19 (MTNNDAAVEAPSSSRASSS). The interval 1-24 (MTNNDAAVEAPSSSRASSSKQQPK) is disordered. Residues Ser133, Asp191, and His218 each act as charge relay system in the active site. The interval 253-289 (VSFIESGAEDNDDDGDANDAEVAAATAAAGSDLDDSD) is disordered. A compositionally biased stretch (acidic residues) spans 259–271 (GAEDNDDDGDAND). Positions 272–283 (AEVAAATAAAGS) are enriched in low complexity.

The protein belongs to the LovG family.

The polypeptide is Esterase GA18864 (Drosophila pseudoobscura pseudoobscura (Fruit fly)).